Reading from the N-terminus, the 703-residue chain is Zinc finger protein 750 (703 aa).

The segment at 25 to 51 (YKCFQCPFTCNEKSHLFNHMKYGLCKN) adopts a CCHC-type zinc-finger fold. 4 residues coordinate Zn(2+): Cys-27, Cys-30, His-43, and Cys-49. Disordered regions lie at residues 60 to 96 (DRVP…SGLS), 121 to 147 (GPHR…EAAV), 362 to 617 (PSKL…EQKQ), and 633 to 703 (NVEP…TRVS). Residues 67–78 (KPNSSDPKQTNQ) are compositionally biased toward polar residues. Residues 79-93 (PDPVVKPTSSKPVPS) show a composition bias toward low complexity. The segment covering 375 to 399 (TELEKQSPTPEAKEPSKDGQRDTEG) has biased composition (basic and acidic residues). Residues 418–428 (SPTNFTQTSQP) are compositionally biased toward polar residues. Low complexity predominate over residues 583 to 592 (SSGDGPDPSS). Residues 605 to 616 (QDIRAADSDEQK) show a composition bias toward basic and acidic residues.

Its subcellular location is the nucleus. Functionally, transcription factor involved in epidermis differentiation. Required for terminal epidermal differentiation: acts downstream of p63/TP63 and activates expression of late epidermal differentiation genes. Specifically binds to the promoter of KLF4 and promotes its expression. This Bos taurus (Bovine) protein is Zinc finger protein 750 (ZNF750).